The sequence spans 412 residues: MKIYLVGGAVRDALLGLPVKDRDWVVVGSTPQEMLDAGYQQVGRDFPVFLHPQTHEEYALARTERKSGSGYTGFTCYAAPDVTLEDDLKRRDLTINALAQDDNGEIIDPYNGLGDLQNRLLRHVSPAFGEDPLRVLRVARFAARYAHLSFRIADETLALMREMTHAGELEHLTPERVWKETENALTTRNPQVFFQVLRDCGALRVLFPEIDALFGVPAPARWHPEIDTGIHTLMTLSMAAMLSPQVDVRFATLCHDLGKGLTPPELWPRHHGHGPAGVKLVEQLCQRLRVPNEIRDLARLVAEFHDLIHTFPMLNPKTIVKLFDSIDAWRKPQRVEQLALTSEADVRGRTGFESADYPQGRWLREAWEVAQSVPTKAVVEAGFKGVEIREELTRRRIAAVANWKEQRCPKSE.

Positions 8 and 11 each coordinate ATP. Residues G8 and R11 each coordinate CTP. Mg(2+) contacts are provided by D21 and D23. Residues R91, R137, and R140 each coordinate ATP. Positions 91, 137, and 140 each coordinate CTP. Residues 228–329 (TGIHTLMTLS…VKLFDSIDAW (102 aa)) form the HD domain.

Belongs to the tRNA nucleotidyltransferase/poly(A) polymerase family. Bacterial CCA-adding enzyme type 1 subfamily. As to quaternary structure, monomer. Can also form homodimers and oligomers. The cofactor is Mg(2+). It depends on Ni(2+) as a cofactor.

It catalyses the reaction a tRNA precursor + 2 CTP + ATP = a tRNA with a 3' CCA end + 3 diphosphate. It carries out the reaction a tRNA with a 3' CCA end + 2 CTP + ATP = a tRNA with a 3' CCACCA end + 3 diphosphate. In terms of biological role, catalyzes the addition and repair of the essential 3'-terminal CCA sequence in tRNAs without using a nucleic acid template. Adds these three nucleotides in the order of C, C, and A to the tRNA nucleotide-73, using CTP and ATP as substrates and producing inorganic pyrophosphate. tRNA 3'-terminal CCA addition is required both for tRNA processing and repair. Also involved in tRNA surveillance by mediating tandem CCA addition to generate a CCACCA at the 3' terminus of unstable tRNAs. While stable tRNAs receive only 3'-terminal CCA, unstable tRNAs are marked with CCACCA and rapidly degraded. The protein is Multifunctional CCA protein of Escherichia coli O81 (strain ED1a).